The chain runs to 628 residues: DNA ligase (628 aa).

Residues 36–40 (DVEYD), 85–86 (SL), and Glu117 contribute to the NAD(+) site. The active-site N6-AMP-lysine intermediate is the Lys119. NAD(+) is bound by residues Arg140, Glu174, Lys309, and Lys333. 4 residues coordinate Zn(2+): Cys427, Cys430, Cys446, and Cys452.

It belongs to the NAD-dependent DNA ligase family. LigA subfamily. Requires Mg(2+) as cofactor. Mn(2+) serves as cofactor.

The enzyme catalyses NAD(+) + (deoxyribonucleotide)n-3'-hydroxyl + 5'-phospho-(deoxyribonucleotide)m = (deoxyribonucleotide)n+m + AMP + beta-nicotinamide D-nucleotide.. Its function is as follows. DNA ligase that catalyzes the formation of phosphodiester linkages between 5'-phosphoryl and 3'-hydroxyl groups in double-stranded DNA using NAD as a coenzyme and as the energy source for the reaction. It is essential for DNA replication and repair of damaged DNA. The polypeptide is DNA ligase (Tropheryma whipplei (strain TW08/27) (Whipple's bacillus)).